The chain runs to 1009 residues: Rho-type GTPase-activating protein 2 (1009 aa).

2 LIM zinc-binding domains span residues 11–68 (SLCV…DCSD) and 69–129 (KCTN…LLRK). Positions 143-155 (KEDFPIKLPERSV) are enriched in basic and acidic residues. Disordered regions lie at residues 143 to 228 (KEDF…RTVS), 358 to 433 (TKEN…LSRS), 449 to 608 (TSEM…DATD), 664 to 709 (TREK…ASPK), and 723 to 780 (QVGD…DYTP). Positions 162 to 196 (TRINGKSDVSTNNTAISKNLVSSNEDQQLTPQVLV) are enriched in polar residues. Basic and acidic residues predominate over residues 212–222 (DNSKDREETSS). 2 stretches are compositionally biased toward polar residues: residues 363–385 (KSSQ…ITRT) and 399–414 (LRLS…QTAD). The segment covering 481–491 (NIRKSKAKKNP) has biased composition (basic residues). Polar residues-rich tracts occupy residues 493–510 (SRGQ…QHGN) and 522–553 (QSSL…SSSG). Residues 664-682 (TREKDKQSASSRESLEQKE) are compositionally biased toward basic and acidic residues. Polar residues-rich tracts occupy residues 683-707 (NIAT…SNAS) and 728-749 (ESQQ…QKEI). Phosphoserine is present on S763. One can recognise a Rho-GAP domain in the interval 788 to 1006 (SSLQARCAYE…FILGNYRDIF (219 aa)).

GTPase-activating protein (GAP) for CDC42 and/or RHO1. This chain is Rho-type GTPase-activating protein 2 (RGA2), found in Saccharomyces cerevisiae (strain ATCC 204508 / S288c) (Baker's yeast).